Reading from the N-terminus, the 402-residue chain is Methylthioribose-1-phosphate isomerase (402 aa).

The active-site Proton donor is the Asp275.

It belongs to the eIF-2B alpha/beta/delta subunits family. MtnA subfamily.

The protein localises to the cytoplasm. It is found in the nucleus. It carries out the reaction 5-(methylsulfanyl)-alpha-D-ribose 1-phosphate = 5-(methylsulfanyl)-D-ribulose 1-phosphate. Its pathway is amino-acid biosynthesis; L-methionine biosynthesis via salvage pathway; L-methionine from S-methyl-5-thio-alpha-D-ribose 1-phosphate: step 1/6. Functionally, catalyzes the interconversion of methylthioribose-1-phosphate (MTR-1-P) into methylthioribulose-1-phosphate (MTRu-1-P). The chain is Methylthioribose-1-phosphate isomerase from Clavispora lusitaniae (strain ATCC 42720) (Yeast).